The following is a 237-amino-acid chain: Pyrimidine 5'-nucleotidase PynA (237 aa).

D9 (nucleophile) is an active-site residue. Mg(2+) is bound by residues D9, D11, and D181. D11 functions as the Proton donor in the catalytic mechanism.

This sequence belongs to the HAD-like hydrolase superfamily. YjjG family. As to quaternary structure, homodimer. Mg(2+) serves as cofactor. Mn(2+) is required as a cofactor.

Its subcellular location is the cytoplasm. It carries out the reaction a ribonucleoside 5'-phosphate + H2O = a ribonucleoside + phosphate. Functionally, nucleotidase that shows high phosphatase activity toward non-canonical pyrimidine nucleotides and three canonical nucleoside 5'-monophosphates (UMP, dUMP and dTMP), and no activity against IMP, UDP, GMP, AMP, UTP or pNPP. Appears to function as a house-cleaning nucleotidase in vivo, since the general nucleotidase activity of it allows it to protect cells against non-canonical pyrimidine derivatives such as 5-fluoro-2'-deoxyuridine monophosphate (5-FdUMP), and prevents the incorporation of potentially mutagenic nucleotides such as 5-bromo-2'-deoxyuridine (5-BrdU) into DNA. Is strictly specific to pyrimidine substrates with 5'-monophosphates and shows no activity against nucleoside di- and triphosphates. This is Pyrimidine 5'-nucleotidase PynA from Streptococcus pneumoniae (strain ATCC BAA-255 / R6).